Consider the following 525-residue polypeptide: DEAD-box ATP-dependent RNA helicase CshA (525 aa).

The Q motif motif lies at 2 to 30 (TTFRELGLSDSLLQSVESMGFEEATPIQA). The Helicase ATP-binding domain occupies 33 to 203 (IPHALQGKDI…ERFMTEPQHI (171 aa)). Residue 46-53 (AQTGTGKT) participates in ATP binding. Positions 151–154 (DEAD) match the DEAD box motif. The Helicase C-terminal domain occupies 214 to 374 (NIQQFYLEVQ…RMDAPTLDEA (161 aa)). Positions 428-525 (TTPIALTSEP…RKHHSRKPQA (98 aa)) are disordered. Residues 458–503 (DGNRNRSRDGRGGDGRNRDRNRDGRNRDGNRDRNRDGGNRGRRGEG) show a composition bias toward basic and acidic residues. A compositionally biased stretch (basic residues) spans 515-525 (ERKHHSRKPQA).

The protein belongs to the DEAD box helicase family. CshA subfamily. Oligomerizes, may be a member of the RNA degradosome.

The protein resides in the cytoplasm. The enzyme catalyses ATP + H2O = ADP + phosphate + H(+). Functionally, DEAD-box RNA helicase possibly involved in RNA degradation. Unwinds dsRNA in both 5'- and 3'-directions, has RNA-dependent ATPase activity. The chain is DEAD-box ATP-dependent RNA helicase CshA from Bacillus cereus (strain ATCC 10987 / NRS 248).